The primary structure comprises 548 residues: SH2/SH3 adapter protein dreadlocks (548 aa).

Disordered stretches follow at residues 12–37, 57–92, and 113–146; these read IPDS…QHQN, QVPV…TASS, and GSGS…MKHG. The segment covering 20–37 has biased composition (low complexity); the sequence is QQYPQQQQHPPQLPQHQN. The segment covering 113 to 122 has biased composition (gly residues); it reads GSGSANGSGS. Positions 123–135 are enriched in low complexity; that stretch reads GNSSSGSAAGNAG. Residues 150–209 enclose the SH3 1 domain; the sequence is DDVCYVVAKYDYAAQGAQELDLRKNERYLLLDDSKHWWRVQNSRNQSGYVPSNYVKKEKP. The disordered stretch occupies residues 219–247; it reads VKKGSGSKTLPNCSPSRQVESPTMSRRLP. Residues 227-242 show a composition bias toward polar residues; that stretch reads TLPNCSPSRQVESPTM. SH3 domains lie at 252–311 and 324–386; these read EAIG…EDCD and NVLD…ELND. The tract at residues 398-442 is disordered; it reads SAGNGNGGGSNGGAGGGGGNDSMERRNEGNKPAAQSSGQPIERPN. Gly residues predominate over residues 401-417; the sequence is NGNGGGSNGGAGGGGGN. The SH2 domain maps to 448 to 542; it reads WYYGAITRSQ…GEKLYLVRSL (95 aa).

As to quaternary structure, interacts (via SH2 and SH3 domains) with Dscam1 (via cytoplasmic domain); the interaction is direct and requires Dscam1 to be phosphorylated. Interacts (via SH2 and SH3 domains) with InR/Insulin-like receptor (via C-terminal cytoplasmic region); the interaction requires InR kinase activity, probably for autophosphorylation stimulated by insulin signaling. Interacts with Ptp61F (via C-terminus); this interaction is independent of insulin stimulation. Interacts (via SH3 domain 2) with Pak (via N-terminal PXXP motif). In terms of processing, phosphorylated by Src42A and possibly by other tyrosine kinases. Constitutively dephosphorylated by its binding partner Ptp61F.

The protein resides in the perikaryon. It localises to the cell projection. Its subcellular location is the axon. The protein localises to the growth cone. Its function is as follows. Adapter protein that links cell surface receptor tyrosine phosphorylation to downstream signaling pathways and effectors, many of which are involved in regulation of the actin cytoskeleton. Recruited by Dscam1/Down syndrome cell adhesion molecule homolog and InR/insulin-like receptor. Recruits Pak to membranes, probably when dock/dreadlocks is associated with activated receptors. Required for guidance and targeting of photoreceptor (R cell) axon projections but not for axon outgrowth, differentiation or target induction in the developing eye. As part of a signaling pathway that involves the lbm/late bloomer protein, involved in synapse formation of the RP3 motorneuron at the muscle 7/6 cleft, probably by stimulating axon defasciculation from other SNb neurons. This Drosophila melanogaster (Fruit fly) protein is SH2/SH3 adapter protein dreadlocks.